A 113-amino-acid polypeptide reads, in one-letter code: Large ribosomal subunit protein bL20c (113 aa).

This sequence belongs to the bacterial ribosomal protein bL20 family.

Its subcellular location is the plastid. It is found in the chloroplast. In terms of biological role, binds directly to 23S ribosomal RNA and is necessary for the in vitro assembly process of the 50S ribosomal subunit. It is not involved in the protein synthesizing functions of that subunit. This chain is Large ribosomal subunit protein bL20c, found in Nephroselmis olivacea (Green alga).